Consider the following 1036-residue polypeptide: Protein translocase subunit SecA, chloroplastic (1036 aa).

Residues 1–76 constitute a chloroplast transit peptide; sequence MESCARSASQ…KIGELMQVRA (76 aa). An ATP-binding site is contributed by 186 to 193; that stretch reads MRTGEGKT. Positions 995–1036 are disordered; that stretch reads NQEQQQKGKPDSSNVENKRIGDANLNPVSVTESPSSDSPQNT. The segment covering 1000-1015 has biased composition (basic and acidic residues); the sequence is QKGKPDSSNVENKRIG. Residues 1020-1036 are compositionally biased toward polar residues; sequence NPVSVTESPSSDSPQNT.

The protein belongs to the SecA family.

The protein resides in the plastid. The protein localises to the chloroplast stroma. It localises to the chloroplast thylakoid membrane. It carries out the reaction ATP + H2O + chloroplast-proteinSide 1 = ADP + phosphate + chloroplast-proteinSide 2.. Its function is as follows. Has a central role in coupling the hydrolysis of ATP to the transfer of proteins across the thylakoid membrane. The protein is Protein translocase subunit SecA, chloroplastic of Spinacia oleracea (Spinach).